The primary structure comprises 248 residues: Amphiregulin (248 aa).

The N-terminal stretch at 1–26 (MRTPLLPLARSVLLLLVLGSGHYAAA) is a signal peptide. A propeptide spanning residues 27–99 (LELNDPSSGK…IIDDSVRVEQ (73 aa)) is cleaved from the precursor. 3 disordered regions span residues 29–48 (LNDPSSGKGESLSGDHSAGG), 57–77 (VSTISEMPSGSELSTGDYDYS), and 100–136 (VIKPKKNKTEGEKSTEKPKRKKKGGKNGKGRRNKKKK). A compositionally biased stretch (polar residues) spans 58–70 (STISEMPSGSELS). Basic and acidic residues predominate over residues 100–116 (VIKPKKNKTEGEKSTEK). The N-linked (GlcNAc...) asparagine glycan is linked to Asn-106. The segment covering 117 to 136 (PKRKKKGGKNGKGRRNKKKK) has biased composition (basic residues). One can recognise an EGF-like domain in the interval 135 to 175 (KKNPCTAKFQNFCIHGECRYIENLEVVTCNCHQDYFGERCG). 3 cysteine pairs are disulfide-bonded: Cys-139–Cys-152, Cys-147–Cys-163, and Cys-165–Cys-174. Residues 192–215 (IAVVAVTIFVSAIILAAIGIGIVI) form a helical membrane-spanning segment. N-linked (GlcNAc...) asparagine glycosylation is present at Asn-241.

Belongs to the amphiregulin family. The immature precursor interacts with CNIH.

Its subcellular location is the membrane. In terms of biological role, ligand of the EGF receptor/EGFR. Autocrine growth factor as well as a mitogen for a broad range of target cells including astrocytes, Schwann cells and fibroblasts. The protein is Amphiregulin (Areg) of Mus musculus (Mouse).